The primary structure comprises 485 residues: Forkhead box protein N3 (485 aa).

Positions 1 to 21 are disordered; the sequence is MGPVMPPSKKPESPGISVSSG. Ser83, Ser85, and Ser97 each carry phosphoserine. The tract at residues 86–108 is disordered; the sequence is PVQDLDDDTPPSPAHSDMPYDAR. Positions 114–210 form a DNA-binding region, fork-head; the sequence is KPPYSFSCLI…QALKKTPYHS (97 aa). The disordered stretch occupies residues 315-454; the sequence is RTESEPSCGS…DEEMKEAAGS (140 aa). A compositionally biased stretch (low complexity) spans 338–359; it reads SSAKSSHARSTSPASDCVSSSS. Basic and acidic residues predominate over residues 382–404; it reads HESHSETEEDDRKCSPKEAKDAL. Basic residues predominate over residues 412-424; sequence QHKKRQHFAKARK. Residue Ser443 is modified to Phosphoserine.

Interacts through its C-terminus with the C-terminus of SNW1/SKIP.

The protein localises to the nucleus. In terms of biological role, acts as a transcriptional repressor. May be involved in DNA damage-inducible cell cycle arrests (checkpoints). This is Forkhead box protein N3 (FOXN3) from Sus scrofa (Pig).